Consider the following 629-residue polypeptide: Proteoglycan Cow (629 aa).

The N-terminal stretch at 1–27 is a signal peptide; that stretch reads MKHSPLIASACLALVLMSSSLIGSTEA. 2 disordered regions span residues 118 to 186 and 198 to 223; these read KRRV…ESKE and GDKQQQQQQLSQPAAGPSVIQQDDDE. Over residues 128–143 the composition is skewed to acidic residues; sequence DSQDAEDINNDDEDNS. The N-linked (GlcNAc...) asparagine glycan is linked to Asn-142. Low complexity predominate over residues 144 to 159; that stretch reads SDGGSSNSSPTGTNNA. Residues 167–186 are compositionally biased toward acidic residues; that stretch reads EETDDEDKSLSLGDDDESKE. A Kazal-like domain is found at 222 to 273; that stretch reads DEELDNCKPCPVAKPTFLCGADNRTYSSLCRLDYHNCIHSTSIRIACKGFCP. 3 disulfides stabilise this stretch: Cys-228–Cys-258, Cys-231–Cys-251, and Cys-240–Cys-272. Asn-244 is a glycosylation site (N-linked (GlcNAc...) asparagine). Positions 298–356 are disordered; the sequence is SLDQQQQQQQQQQQQQQQQQAYKDSNNNNIMMNSGNIMGGNNNDFNTIMNDKEDNNRHN. A compositionally biased stretch (low complexity) spans 301-340; it reads QQQQQQQQQQQQQQQQQAYKDSNNNNIMMNSGNIMGGNNN. EF-hand domains lie at 468–503 and 508–535; these read ACKTEAKWMFGHLDLNNDGQLSLQEMYDLEHDQNER and FIDTCDLDTDSSINTREWCRCFEKTDRP. The Ca(2+) site is built by Asp-481, Asn-483, Asp-485, Gln-487, and Glu-492. The Thyroglobulin type-1 domain maps to 533 to 594; sequence DRPCAAVRRR…NTRTRGKPNC (62 aa). 3 disulfide bridges follow: Cys-536–Cys-555, Cys-566–Cys-573, and Cys-575–Cys-594. Residues 602–629 form a disordered region; it reads ASLTSDDEDEGADDEDSAEGSADQMLVF. The span at 606–619 shows a compositional bias: acidic residues; the sequence is SDDEDEGADDEDSA. Positions 620–629 are enriched in low complexity; that stretch reads EGSADQMLVF.

In terms of assembly, interacts (in heparan sulfate-bound form) with wg. Post-translationally, contains heparan sulfate O-linked oligosaccharides. In the wing disk, detected throughout the disk where it is localized primarily to the apical surface but is also present at the basal surface (at protein level).

The protein resides in the secreted. Binds to the Wnt signaling protein wg, stabilizes it and promotes its extracellular distribution. This is required for establishment of a wg gradient during development to allow for regulation of target genes at different levels. The protein is Proteoglycan Cow of Drosophila melanogaster (Fruit fly).